Consider the following 71-residue polypeptide: Conotoxin Vc6.12 (71 aa).

The N-terminal stretch at 1–19 is a signal peptide; it reads MQKLIILLLVAAVLMSTQA. A propeptide spanning residues 20–43 is cleaved from the precursor; it reads LFQEKRPMKKINFLSKGKTDAEKQ. Intrachain disulfides connect C48-C62, C55-C66, and C61-C70.

This sequence belongs to the conotoxin O2 superfamily. Expressed by the venom duct.

The protein resides in the secreted. In terms of biological role, inhibits voltage-gated ion channels. This is Conotoxin Vc6.12 from Conus victoriae (Queen Victoria cone).